A 45-amino-acid polypeptide reads, in one-letter code: Thymosin beta-15A homolog (45 aa).

A disordered region spans residues 19-45; the sequence is KKTNTEEKNTLPSKETIEQEKECVKSS. The span at 21-45 shows a compositional bias: basic and acidic residues; the sequence is TNTEEKNTLPSKETIEQEKECVKSS.

The protein belongs to the thymosin beta family.

Its subcellular location is the cytoplasm. It localises to the cytoskeleton. Plays an important role in the organization of the cytoskeleton. Binds to and sequesters actin monomers (G actin) and therefore inhibits actin polymerization. This Coturnix japonica (Japanese quail) protein is Thymosin beta-15A homolog.